We begin with the raw amino-acid sequence, 357 residues long: Protein-arginine kinase (357 aa).

In terms of domain architecture, Phosphagen kinase C-terminal spans 24–255 (IVISTRLRIA…RQIIEQERVA (232 aa)). ATP is bound by residues 27–31 (STRLR), His92, Arg126, 177–181 (RASVM), and 208–213 (RGIYGE). Residues 338–343 (RDERRA) carry the RDXXRA motif of the pArg binding pocket involved in allosteric regulation motif.

Belongs to the ATP:guanido phosphotransferase family.

The catalysed reaction is L-arginyl-[protein] + ATP = N(omega)-phospho-L-arginyl-[protein] + ADP + H(+). Its activity is regulated as follows. Appears to be allosterically activated by the binding of pArg-containing polypeptides to the pArg-binding pocket localized in the C-terminal domain of McsB. Functionally, catalyzes the specific phosphorylation of arginine residues in proteins. The protein is Protein-arginine kinase of Brevibacillus brevis (strain 47 / JCM 6285 / NBRC 100599).